A 762-amino-acid chain; its full sequence is cGMP-dependent protein kinase 2 (762 aa).

Residues 1–26 are disordered; sequence MGNGSVKPKHAKHPDGHSGNLSNEAL. A lipid anchor (N-myristoyl glycine) is attached at glycine 2. Residues serine 110 and serine 117 each carry the phosphoserine modification. A disordered region spans residues 118–138; the sequence is RRGAKAGVSAEPTTRTYDLNK. Residues 168–283 are cGMP-binding, high affinity; cAMP-binding, moderate affinity; sequence FLKRLDPQQI…DEEYRNFLRS (116 aa). 3',5'-cyclic GMP contacts are provided by residues 232 to 235, 242 to 243, lysine 347, 356 to 359, 366 to 367, aspartate 412, and arginine 415; these read GELA, RT, GEKA, and RS. Residues 286 to 416 are cGMP-binding, high affinity; cAMP-binding, low affinity; sequence LLKNLPEDKL…TLNRDDEKRH (131 aa). Phosphoserine is present on serine 431. One can recognise a Protein kinase domain in the interval 453 to 711; that stretch reads LEIIATLGVG…INDIKKHRWL (259 aa). Residues 459–467 and lysine 482 contribute to the ATP site; that span reads LGVGGFGRV. Aspartate 576 functions as the Proton acceptor in the catalytic mechanism. Threonine 609 carries the phosphothreonine modification. Positions 712 to 762 constitute an AGC-kinase C-terminal domain; the sequence is NGFNWEGLKARSLPSPLRRELSGPIDHSYFDKYPPEKGVPPDEMSGWDKDF. The disordered stretch occupies residues 740-762; it reads YFDKYPPEKGVPPDEMSGWDKDF.

It belongs to the protein kinase superfamily. AGC Ser/Thr protein kinase family. cGMP subfamily. As to quaternary structure, interacts with GRIA1/GLUR1. Post-translationally, myristoylation mediates membrane localization.

Its subcellular location is the apical cell membrane. The protein resides in the cell membrane. It catalyses the reaction L-seryl-[protein] + ATP = O-phospho-L-seryl-[protein] + ADP + H(+). It carries out the reaction L-threonyl-[protein] + ATP = O-phospho-L-threonyl-[protein] + ADP + H(+). Binding of cGMP results in enzyme activation. In terms of biological role, crucial regulator of intestinal secretion and bone growth. Phosphorylates and activates CFTR on the plasma membrane. Plays a key role in intestinal secretion by regulating cGMP-dependent translocation of CFTR in jejunum. Acts downstream of NMDAR to activate the plasma membrane accumulation of GRIA1/GLUR1 in synapse and increase synaptic plasticity. Phosphorylates GRIA1/GLUR1 at Ser-863. Acts as a regulator of gene expression and activator of the extracellular signal-regulated kinases MAPK3/ERK1 and MAPK1/ERK2 in mechanically stimulated osteoblasts. Under fluid shear stress, mediates ERK activation and subsequent induction of FOS, FOSL1/FRA1, FOSL2/FRA2 and FOSB that play a key role in the osteoblast anabolic response to mechanical stimulation. The polypeptide is cGMP-dependent protein kinase 2 (Prkg2) (Mus musculus (Mouse)).